The primary structure comprises 630 residues: Protein mono-ADP-ribosyltransferase PARP6 (630 aa).

Residue Cys-237 is modified to ADP-ribosylcysteine. The PARP catalytic domain maps to 394 to 620 (EMTQGSYLEI…QDPKIQKEIM (227 aa)). Residue Asp-600 is modified to ADP-ribosyl aspartic acid.

Belongs to the ARTD/PARP family. Auto-mono-ADP-ribosylated.

It catalyses the reaction L-aspartyl-[protein] + NAD(+) = 4-O-(ADP-D-ribosyl)-L-aspartyl-[protein] + nicotinamide. The enzyme catalyses L-cysteinyl-[protein] + NAD(+) = S-(ADP-D-ribosyl)-L-cysteinyl-[protein] + nicotinamide + H(+). Functionally, mono-ADP-ribosyltransferase that mediates mono-ADP-ribosylation of target proteins. This is Protein mono-ADP-ribosyltransferase PARP6 from Mus musculus (Mouse).